A 64-amino-acid chain; its full sequence is Large ribosomal subunit protein bL35 (64 aa).

The protein belongs to the bacterial ribosomal protein bL35 family.

The chain is Large ribosomal subunit protein bL35 from Acinetobacter baumannii (strain AB307-0294).